The following is a 41-amino-acid chain: Photosystem I reaction center subunit IX (41 aa).

Residues 7–27 form a helical membrane-spanning segment; sequence YLSTAPVVAAAWFTFTAGLLI.

This sequence belongs to the PsaJ family.

It is found in the plastid. The protein localises to the chloroplast thylakoid membrane. In terms of biological role, may help in the organization of the PsaE and PsaF subunits. In Oltmannsiellopsis viridis (Marine flagellate), this protein is Photosystem I reaction center subunit IX.